Consider the following 42-residue polypeptide: Potassium channel toxin gamma-KTx 1.6 (42 aa).

4 disulfide bridges follow: C5–C23, C11–C34, C20–C39, and C24–C41.

The protein belongs to the ergtoxin family. Gamma-KTx 1 subfamily. In terms of tissue distribution, expressed by the venom gland.

It localises to the secreted. Functionally, blocks Kv11/ERG potassium channels. The polypeptide is Potassium channel toxin gamma-KTx 1.6 (Centruroides exilicauda (Bark scorpion)).